A 359-amino-acid polypeptide reads, in one-letter code: 3-dehydroquinate synthase (359 aa).

NAD(+) contacts are provided by residues 71–76 (DGEQYK), 105–109 (GVIGD), 129–130 (TT), lysine 142, lysine 151, and 169–172 (CLKT). 3 residues coordinate Zn(2+): glutamate 184, histidine 247, and histidine 264.

The protein belongs to the sugar phosphate cyclases superfamily. Dehydroquinate synthase family. The cofactor is Co(2+). Zn(2+) is required as a cofactor. Requires NAD(+) as cofactor.

It localises to the cytoplasm. The catalysed reaction is 7-phospho-2-dehydro-3-deoxy-D-arabino-heptonate = 3-dehydroquinate + phosphate. The protein operates within metabolic intermediate biosynthesis; chorismate biosynthesis; chorismate from D-erythrose 4-phosphate and phosphoenolpyruvate: step 2/7. Functionally, catalyzes the conversion of 3-deoxy-D-arabino-heptulosonate 7-phosphate (DAHP) to dehydroquinate (DHQ). The chain is 3-dehydroquinate synthase from Shewanella amazonensis (strain ATCC BAA-1098 / SB2B).